Consider the following 709-residue polypeptide: Nucleobase-ascorbate transporter 11 (709 aa).

2 disordered regions span residues 1–28 (MDSG…YGER) and 58–167 (TGFV…SEDG). A compositionally biased stretch (gly residues) spans 15–25 (KGNGSGGGNGY). Positions 65–74 (SGETSTSTRT) are enriched in polar residues. Composition is skewed to basic and acidic residues over residues 75–89 (KFGE…KGRD), 108–132 (NRPE…RLNR), and 142–151 (EGGKINKDLE). A run of 12 helical transmembrane segments spans residues 196 to 216 (YLSL…AMDG), 222 to 242 (ASVI…HCYF), 246 to 266 (LPLV…VINS), 288 to 308 (IIVG…SLLL), 310 to 330 (FINP…FFSY), 336 to 356 (GTCV…TLYL), 369 to 389 (IYAV…LTVG), 454 to 474 (IIMI…YHSA), 532 to 552 (LVIG…GAIL), 555 to 575 (IPQA…VSLG), 590 to 610 (ITIV…FQQY), and 642 to 662 (FAMN…AFIL).

The protein belongs to the nucleobase:cation symporter-2 (NCS2) (TC 2.A.40) family. As to expression, expressed in leaf primordia and vasculature of pedicels, rosette leaves, sepals, carpels and siliques. Expressed in the root central cylinder.

It is found in the membrane. This chain is Nucleobase-ascorbate transporter 11 (NAT11), found in Arabidopsis thaliana (Mouse-ear cress).